Consider the following 283-residue polypeptide: Probable endonuclease 4 (283 aa).

Histidine 69, histidine 109, glutamate 144, aspartate 178, histidine 181, histidine 215, aspartate 228, histidine 230, and glutamate 260 together coordinate Zn(2+).

The protein belongs to the AP endonuclease 2 family. The cofactor is Zn(2+).

It catalyses the reaction Endonucleolytic cleavage to 5'-phosphooligonucleotide end-products.. Endonuclease IV plays a role in DNA repair. It cleaves phosphodiester bonds at apurinic or apyrimidinic (AP) sites, generating a 3'-hydroxyl group and a 5'-terminal sugar phosphate. The protein is Probable endonuclease 4 of Thermosipho melanesiensis (strain DSM 12029 / CIP 104789 / BI429).